A 156-amino-acid chain; its full sequence is Small ribosomal subunit protein uS7 (156 aa).

Belongs to the universal ribosomal protein uS7 family. As to quaternary structure, part of the 30S ribosomal subunit. Contacts proteins S9 and S11.

Its function is as follows. One of the primary rRNA binding proteins, it binds directly to 16S rRNA where it nucleates assembly of the head domain of the 30S subunit. Is located at the subunit interface close to the decoding center, probably blocks exit of the E-site tRNA. This chain is Small ribosomal subunit protein uS7, found in Buchnera aphidicola subsp. Cinara cedri (strain Cc).